The primary structure comprises 325 residues: Homeobox protein Hox-A1a (325 aa).

The Antp-type hexapeptide signature appears at 187–192 (TFDWMK). 2 disordered regions span residues 194-215 (KRNP…PNTV) and 264-325 (RMKQ…YPSN). Residues 212–271 (PNTVRTNFTTKQLTELEKEFHFNKYLTRARRVEIAAALQLNETQVKIWFQNRRMKQKKRE) constitute a DNA-binding region (homeobox). The segment covering 285 to 300 (SGERNQEKVEDGESEK) has biased composition (basic and acidic residues). Residues 301–317 (SVSAPSTPSPTSSTVSS) are compositionally biased toward low complexity.

It belongs to the Antp homeobox family. Labial subfamily.

It is found in the nucleus. Its function is as follows. Sequence-specific transcription factor which is part of a developmental regulatory system that provides cells with specific positional identities on the anterior-posterior axis. The chain is Homeobox protein Hox-A1a (hoxa1a) from Takifugu rubripes (Japanese pufferfish).